Reading from the N-terminus, the 746-residue chain is Proline--tRNA ligase (746 aa).

The tract at residues 1-223 is required for editing of incorrectly charged tRNA; the sequence is MNNNTNGEII…NSNNNNNNNN (223 aa). The span at 181-201 shows a compositional bias: basic and acidic residues; the sequence is TSKARVDKKEDVQEEMAKNEE. The disordered stretch occupies residues 181 to 226; the sequence is TSKARVDKKEDVQEEMAKNEELQNNNNNNKNNSNSNNNNNNNNNHI. Low complexity predominate over residues 204-224; the sequence is NNNNNNKNNSNSNNNNNNNNN. Arg-390 contributes to the L-proline binding site. ATP contacts are provided by residues 390-394, 401-405, and 475-477; these read RWEFK, RTREF, and QAA. L-proline is bound at residue His-480. An ATP-binding site is contributed by 512–514; sequence TTR.

The protein belongs to the class-II aminoacyl-tRNA synthetase family. ProS type 3 subfamily. In terms of assembly, homodimer.

The protein localises to the cytoplasm. It catalyses the reaction tRNA(Pro) + L-proline + ATP = L-prolyl-tRNA(Pro) + AMP + diphosphate. With respect to regulation, inhibited by the quinazolinone-based compound febrifugine from the Chinese plant Dichroa febrifuga which is used to treat malaria-associated fever. Also inhibited by febrifugine derivatives such as halofuginone. In terms of biological role, catalyzes the attachment of proline to tRNA(Pro) in a two-step reaction: proline is first activated by ATP to form Pro-AMP and then transferred to the acceptor end of tRNA(Pro). Functions in trans to edit the amino acid moiety from incorrectly charged Ala-tRNA(Pro). Has no activity on correctly charged Pro-tRNA(Pro) or Ala-tRNA(Ala). This is Proline--tRNA ligase from Plasmodium falciparum (isolate 3D7).